The following is a 191-amino-acid chain: GTP cyclohydrolase 1 (191 aa).

Zn(2+) contacts are provided by cysteine 80, histidine 83, and cysteine 151.

The protein belongs to the GTP cyclohydrolase I family. In terms of assembly, toroid-shaped homodecamer, composed of two pentamers of five dimers.

The enzyme catalyses GTP + H2O = 7,8-dihydroneopterin 3'-triphosphate + formate + H(+). It participates in cofactor biosynthesis; 7,8-dihydroneopterin triphosphate biosynthesis; 7,8-dihydroneopterin triphosphate from GTP: step 1/1. The polypeptide is GTP cyclohydrolase 1 (Nitrosospira multiformis (strain ATCC 25196 / NCIMB 11849 / C 71)).